The following is a 162-amino-acid chain: Ribosome maturation factor RimM (162 aa).

The region spanning 90-161 (EDCYYEADIV…KIIIKPLEVW (72 aa)) is the PRC barrel domain.

Belongs to the RimM family. In terms of assembly, binds ribosomal protein uS19.

The protein localises to the cytoplasm. An accessory protein needed during the final step in the assembly of 30S ribosomal subunit, possibly for assembly of the head region. Essential for efficient processing of 16S rRNA. May be needed both before and after RbfA during the maturation of 16S rRNA. It has affinity for free ribosomal 30S subunits but not for 70S ribosomes. In Clostridium novyi (strain NT), this protein is Ribosome maturation factor RimM.